We begin with the raw amino-acid sequence, 629 residues long: 1-deoxy-D-xylulose-5-phosphate synthase (629 aa).

Thiamine diphosphate is bound by residues H73 and 114 to 116 (GHA). D145 lines the Mg(2+) pocket. Thiamine diphosphate-binding positions include 146-147 (GA), N174, Y284, and E360. Residue N174 coordinates Mg(2+).

Belongs to the transketolase family. DXPS subfamily. Homodimer. Mg(2+) is required as a cofactor. It depends on thiamine diphosphate as a cofactor.

It catalyses the reaction D-glyceraldehyde 3-phosphate + pyruvate + H(+) = 1-deoxy-D-xylulose 5-phosphate + CO2. The protein operates within metabolic intermediate biosynthesis; 1-deoxy-D-xylulose 5-phosphate biosynthesis; 1-deoxy-D-xylulose 5-phosphate from D-glyceraldehyde 3-phosphate and pyruvate: step 1/1. Its function is as follows. Catalyzes the acyloin condensation reaction between C atoms 2 and 3 of pyruvate and glyceraldehyde 3-phosphate to yield 1-deoxy-D-xylulose-5-phosphate (DXP). The sequence is that of 1-deoxy-D-xylulose-5-phosphate synthase from Thermomicrobium roseum (strain ATCC 27502 / DSM 5159 / P-2).